A 157-amino-acid polypeptide reads, in one-letter code: Mannose-specific lectin (157 aa).

A signal peptide (or 23; in 70% of the molecules) is located at residues 1–19 (MAKASLLILAAIFLGVITP). A Bulb-type lectin domain is found at 24 to 132 (DNILYSGETL…DRWATGTHTG (109 aa)). Residues Gln49, Asp51, Asn53, Tyr57, Asp60, Lys61, Trp64, Ala65, Asn67, Gln80, Asp82, Asn84, Tyr88, Ile95, Trp96, Asn99, Asn106, Gln112, Asp114, Asn116, Tyr120, and Trp125 each coordinate alpha-D-mannopyranose. Cys52 and Cys75 are oxidised to a cystine. Positions 129–157 (THTGLVGIPASPPSEKYPTAGKIKLVTAK) are cleaved as a propeptide — removed in mature form.

As to quaternary structure, homotetramer.

Its subcellular location is the secreted. In terms of biological role, mannose-specific lectin which binds alpha-D-linked mannose. Displays a high affinity for alpha-(1-3)-mannose oligomers. Displays antiviral activity and therefore may contribute to defense against infections. The chain is Mannose-specific lectin from Galanthus nivalis (Common snowdrop).